We begin with the raw amino-acid sequence, 371 residues long: uncharacterized protein (371 aa).

Helical transmembrane passes span 9–29 (FTLD…VFLI), 58–78 (VLAF…FLAI), 98–118 (LIVA…SFIF), 133–153 (LAPF…VSVI), 159–179 (YDVN…ALAA), 183–203 (ISNF…IGDW), and 330–350 (IIEI…MVVV).

This sequence belongs to the MscS (TC 1.A.23) family.

The protein localises to the cell membrane. In terms of biological role, may play a role in resistance to osmotic downshock. This is an uncharacterized protein from Bacillus subtilis (strain 168).